Here is a 129-residue protein sequence, read N- to C-terminus: Ubiquinol-cytochrome-c reductase complex assembly factor 2 (129 aa).

A mitochondrion-targeting transit peptide spans 1-13 (MSATRYRRFLKLC).

The protein resides in the mitochondrion matrix. It is found in the mitochondrion nucleoid. Its subcellular location is the mitochondrion. In terms of biological role, required for the assembly of the ubiquinol-cytochrome c reductase complex (mitochondrial respiratory chain complex III or cytochrome b-c1 complex). May play a role in the modulation of respiratory chain activities such as oxygen consumption and ATP production. May be involved in cytochrome b translation and/or stability. This Danio rerio (Zebrafish) protein is Ubiquinol-cytochrome-c reductase complex assembly factor 2 (uqcc2).